Reading from the N-terminus, the 350-residue chain is Beta-hexosaminidase (350 aa).

Residues Asp62, Arg70, Arg133, and 163–164 (KH) each bind substrate. His176 serves as the catalytic Proton donor/acceptor. The Nucleophile role is filled by Asp248.

Belongs to the glycosyl hydrolase 3 family. NagZ subfamily.

The protein localises to the cytoplasm. The catalysed reaction is Hydrolysis of terminal non-reducing N-acetyl-D-hexosamine residues in N-acetyl-beta-D-hexosaminides.. It functions in the pathway cell wall biogenesis; peptidoglycan recycling. Its function is as follows. Plays a role in peptidoglycan recycling by cleaving the terminal beta-1,4-linked N-acetylglucosamine (GlcNAc) from peptide-linked peptidoglycan fragments, giving rise to free GlcNAc, anhydro-N-acetylmuramic acid and anhydro-N-acetylmuramic acid-linked peptides. This Haemophilus influenzae (strain PittEE) protein is Beta-hexosaminidase.